Here is a 712-residue protein sequence, read N- to C-terminus: Polyadenylation factor subunit 2 (712 aa).

The segment at 1–37 (MTAPTVPADQHGHPLPGPADPAANDTWRPSRYREPLH) is disordered. WD repeat units lie at residues 131-170 (KERSPTRVVRWTPDARRLLTGNDKGQFTLWNGASFNYESI), 173-213 (VHDD…HGFQ), 214-253 (GHREACHDVSWSPNDERFVTCGDDGLVKIWSYREAKEERS), 256-295 (GHGWDVRCVDWHPTKGLIVSGSKDMLVKFWDPRTGKDLST), 298-337 (SSKSTINTCRWSPDGHLVATAGQDSVIRLFDIRTFRELEV), 340-380 (GHEK…PSTP), and 387-426 (AHEDAVFSLSFHPLGHILCSGSKDFTARFWCRARPPGGQE). Disordered stretches follow at residues 446–473 (TKREWGTNAPPANAAGGGGGGGGDKQQV) and 489–712 (KTGP…DGRR). Composition is skewed to gly residues over residues 460-469 (AGGGGGGGGD) and 494-504 (TTGGGPSGLPG). The segment covering 533-545 (QGQAQGGQFPRGR) has biased composition (low complexity). Positions 565–592 (FADRDRNGGGDRGGMDRDRDSRGGRQDP) are enriched in basic and acidic residues. 2 stretches are compositionally biased toward pro residues: residues 603 to 612 (GGPPPGPPPG) and 619 to 671 (PPAP…PQGP). The segment covering 678 to 712 (GGQGNYGASASGGYGQYGGGGGGGGGGGYGRDGRR) has biased composition (gly residues).

It localises to the nucleus. Functionally, required for 3'-end cleavage and polyadenylation of pre-mRNAs. Also involved in chromosome segregation where it has a role in chromosome attachment to the mitotic spindle. In Cryptococcus neoformans var. neoformans serotype D (strain JEC21 / ATCC MYA-565) (Filobasidiella neoformans), this protein is Polyadenylation factor subunit 2 (PFS2).